A 217-amino-acid polypeptide reads, in one-letter code: Peroxiredoxin (217 aa).

Residues 2-159 (PVIGEKFPEV…IVRLVKALQV (158 aa)) enclose the Thioredoxin domain. Cys46 acts as the Cysteine sulfenic acid (-SOH) intermediate in catalysis. Arg122 contacts substrate. Cys206 and Cys212 are disulfide-bonded.

The protein belongs to the peroxiredoxin family. Prx6 subfamily. As to quaternary structure, homodecamer. Pentamer of dimers that assemble into a ring structure.

It localises to the cytoplasm. The enzyme catalyses a hydroperoxide + [thioredoxin]-dithiol = an alcohol + [thioredoxin]-disulfide + H2O. Thiol-specific peroxidase that catalyzes the reduction of hydrogen peroxide and organic hydroperoxides to water and alcohols, respectively. Plays a role in cell protection against oxidative stress by detoxifying peroxides. This chain is Peroxiredoxin, found in Methanocaldococcus jannaschii (strain ATCC 43067 / DSM 2661 / JAL-1 / JCM 10045 / NBRC 100440) (Methanococcus jannaschii).